A 45-amino-acid chain; its full sequence is Large ribosomal subunit protein bL36 (45 aa).

The disordered stretch occupies residues 1 to 45; the sequence is MKVSSSIKADPSKGDKLVRRKGRLYVINKKDPNRKQRQAGPARKK.

It belongs to the bacterial ribosomal protein bL36 family.

This Chlamydia caviae (strain ATCC VR-813 / DSM 19441 / 03DC25 / GPIC) (Chlamydophila caviae) protein is Large ribosomal subunit protein bL36.